Here is a 338-residue protein sequence, read N- to C-terminus: Ketol-acid reductoisomerase (NADP(+)) (338 aa).

One can recognise a KARI N-terminal Rossmann domain in the interval 1–181; the sequence is MKVFYDKDCD…GGGRTGIIET (181 aa). Residues 24-27, Arg47, Ser50, Thr52, and 82-85 contribute to the NADP(+) site; these read YGSQ and DEFQ. His107 is an active-site residue. Residue Gly133 participates in NADP(+) binding. The region spanning 182 to 327 is the KARI C-terminal knotted domain; sequence TFKDETETDL…EQLRSMMPWI (146 aa). Mg(2+)-binding residues include Asp190, Glu194, Glu226, and Glu230. Substrate is bound at residue Ser251.

The protein belongs to the ketol-acid reductoisomerase family. Requires Mg(2+) as cofactor.

The catalysed reaction is (2R)-2,3-dihydroxy-3-methylbutanoate + NADP(+) = (2S)-2-acetolactate + NADPH + H(+). The enzyme catalyses (2R,3R)-2,3-dihydroxy-3-methylpentanoate + NADP(+) = (S)-2-ethyl-2-hydroxy-3-oxobutanoate + NADPH + H(+). The protein operates within amino-acid biosynthesis; L-isoleucine biosynthesis; L-isoleucine from 2-oxobutanoate: step 2/4. Its pathway is amino-acid biosynthesis; L-valine biosynthesis; L-valine from pyruvate: step 2/4. In terms of biological role, involved in the biosynthesis of branched-chain amino acids (BCAA). Catalyzes an alkyl-migration followed by a ketol-acid reduction of (S)-2-acetolactate (S2AL) to yield (R)-2,3-dihydroxy-isovalerate. In the isomerase reaction, S2AL is rearranged via a Mg-dependent methyl migration to produce 3-hydroxy-3-methyl-2-ketobutyrate (HMKB). In the reductase reaction, this 2-ketoacid undergoes a metal-dependent reduction by NADPH to yield (R)-2,3-dihydroxy-isovalerate. This chain is Ketol-acid reductoisomerase (NADP(+)), found in Pseudomonas putida (strain ATCC 700007 / DSM 6899 / JCM 31910 / BCRC 17059 / LMG 24140 / F1).